The chain runs to 255 residues: H-2 class II histocompatibility antigen, E-K alpha chain (255 aa).

The N-terminal stretch at 1-25 is a signal peptide; that stretch reads MATIGALVLRFFFIAVLMSSQKSWA. The segment at 26–109 is alpha-1; it reads IKEEHTIIQA…ERSNNTPDAN (84 aa). The Extracellular segment spans residues 26–216; it reads IKEEHTIIQA…EKTLLPETKE (191 aa). Residues 110-203 are alpha-2; that stretch reads VAPEVTVLSR…GLEEPLRKHW (94 aa). The Ig-like C1-type domain occupies 112–204; it reads PEVTVLSRSP…LEEPLRKHWE (93 aa). A disulfide bond links C132 and C188. A glycan (N-linked (GlcNAc...) asparagine) is linked at N143. The tract at residues 204–216 is connecting peptide; sequence EFEEKTLLPETKE. Residues 217–242 traverse the membrane as a helical segment; that stretch reads NVVCALGLFVGLVGIVVGIILIMKGI. The Cytoplasmic segment spans residues 243–255; the sequence is KKRNVVERRQGAL.

The protein belongs to the MHC class II family.

It localises to the membrane. This is H-2 class II histocompatibility antigen, E-K alpha chain from Mus musculus (Mouse).